Consider the following 414-residue polypeptide: Light-independent protochlorophyllide reductase subunit N (414 aa).

Positions 16, 41, and 98 each coordinate [4Fe-4S] cluster.

Belongs to the BchN/ChlN family. In terms of assembly, protochlorophyllide reductase is composed of three subunits; BchL, BchN and BchB. Forms a heterotetramer of two BchB and two BchN subunits. The cofactor is [4Fe-4S] cluster.

It carries out the reaction chlorophyllide a + oxidized 2[4Fe-4S]-[ferredoxin] + 2 ADP + 2 phosphate = protochlorophyllide a + reduced 2[4Fe-4S]-[ferredoxin] + 2 ATP + 2 H2O. The protein operates within porphyrin-containing compound metabolism; bacteriochlorophyll biosynthesis (light-independent). Component of the dark-operative protochlorophyllide reductase (DPOR) that uses Mg-ATP and reduced ferredoxin to reduce ring D of protochlorophyllide (Pchlide) to form chlorophyllide a (Chlide). This reaction is light-independent. The NB-protein (BchN-BchB) is the catalytic component of the complex. This Roseiflexus castenholzii (strain DSM 13941 / HLO8) protein is Light-independent protochlorophyllide reductase subunit N.